A 63-amino-acid chain; its full sequence is Large ribosomal subunit protein uL30 (63 aa).

It belongs to the universal ribosomal protein uL30 family. Part of the 50S ribosomal subunit.

This chain is Large ribosomal subunit protein uL30, found in Caulobacter sp. (strain K31).